We begin with the raw amino-acid sequence, 355 residues long: MSGQPKRLMVMAGGTGGHVFPGLAVAHHLMAQGWQVRWLGTADRMEADLVPKHGIDIDFIRISGLRGKGVKALLAAPLRIFNAWRQARAIMKRFKPDVVLGMGGYVSGPGGLAAWSLGIPVVLHEQNGIAGLTNQWLAKIATTVMQAFPGAFPNAEVVGNPVRTDVLALPLPQVRLAGRDGPIRVLVVGGSQGARVLNQTMPQVAARLGDTVTIWHQSGKGVQHTVEQAYAGVGQPQHKVTEFIDDMAAAYAWADVVVCRSGALTVSEIAAAGLPAIFVPFQHKDRQQYWNALPLENAGAAKIFEQPQFTVEAVADTLAGWSRGALLTMAERARAVSIPDATERVASEVSRVART.

Residues 15–17 (TGG), Asn-127, Arg-163, Ser-191, Ile-244, 263–268 (ALTVSE), and Gln-288 contribute to the UDP-N-acetyl-alpha-D-glucosamine site.

The protein belongs to the glycosyltransferase 28 family. MurG subfamily.

Its subcellular location is the cell inner membrane. It carries out the reaction di-trans,octa-cis-undecaprenyl diphospho-N-acetyl-alpha-D-muramoyl-L-alanyl-D-glutamyl-meso-2,6-diaminopimeloyl-D-alanyl-D-alanine + UDP-N-acetyl-alpha-D-glucosamine = di-trans,octa-cis-undecaprenyl diphospho-[N-acetyl-alpha-D-glucosaminyl-(1-&gt;4)]-N-acetyl-alpha-D-muramoyl-L-alanyl-D-glutamyl-meso-2,6-diaminopimeloyl-D-alanyl-D-alanine + UDP + H(+). Its pathway is cell wall biogenesis; peptidoglycan biosynthesis. In terms of biological role, cell wall formation. Catalyzes the transfer of a GlcNAc subunit on undecaprenyl-pyrophosphoryl-MurNAc-pentapeptide (lipid intermediate I) to form undecaprenyl-pyrophosphoryl-MurNAc-(pentapeptide)GlcNAc (lipid intermediate II). The protein is UDP-N-acetylglucosamine--N-acetylmuramyl-(pentapeptide) pyrophosphoryl-undecaprenol N-acetylglucosamine transferase of Salmonella dublin (strain CT_02021853).